The chain runs to 414 residues: Imidazolonepropionase (414 aa).

Fe(3+)-binding residues include His95 and His97. Positions 95 and 97 each coordinate Zn(2+). 4-imidazolone-5-propanoate is bound by residues Arg104, Tyr162, and His189. Residue Tyr162 participates in N-formimidoyl-L-glutamate binding. His252 is a Fe(3+) binding site. A Zn(2+)-binding site is contributed by His252. 4-imidazolone-5-propanoate is bound at residue Gln255. Residue Asp326 coordinates Fe(3+). Asp326 contributes to the Zn(2+) binding site. Residues Asn328 and Gly330 each coordinate N-formimidoyl-L-glutamate. Ser331 lines the 4-imidazolone-5-propanoate pocket.

The protein belongs to the metallo-dependent hydrolases superfamily. HutI family. Zn(2+) is required as a cofactor. Requires Fe(3+) as cofactor.

The protein resides in the cytoplasm. The enzyme catalyses 4-imidazolone-5-propanoate + H2O = N-formimidoyl-L-glutamate. It participates in amino-acid degradation; L-histidine degradation into L-glutamate; N-formimidoyl-L-glutamate from L-histidine: step 3/3. In terms of biological role, catalyzes the hydrolytic cleavage of the carbon-nitrogen bond in imidazolone-5-propanoate to yield N-formimidoyl-L-glutamate. It is the third step in the universal histidine degradation pathway. The sequence is that of Imidazolonepropionase from Streptomyces avermitilis (strain ATCC 31267 / DSM 46492 / JCM 5070 / NBRC 14893 / NCIMB 12804 / NRRL 8165 / MA-4680).